A 181-amino-acid polypeptide reads, in one-letter code: Trafficking protein particle complex subunit 3-like protein (181 aa).

Cys68 carries S-palmitoyl cysteine lipidation.

It belongs to the TRAPP small subunits family. BET3 subfamily. Homodimer. Component of the multisubunit TRAPP (transport protein particle) complex, which includes at least TRAPPC2, TRAPPC2L, TRAPPC3, TRAPPC3L, TRAPPC4, TRAPPC5, TRAPPC8, TRAPPC9, TRAPPC10, TRAPPC11 and TRAPPC12.

It localises to the golgi apparatus. The protein resides in the cis-Golgi network. Its subcellular location is the endoplasmic reticulum. In terms of biological role, may play a role in vesicular transport from endoplasmic reticulum to Golgi. The polypeptide is Trafficking protein particle complex subunit 3-like protein (TRAPPC3L) (Homo sapiens (Human)).